The sequence spans 693 residues: Elongation factor G (693 aa).

The tr-type G domain occupies 8 to 282 (EKTRNIGIMA…AVIDYLPSPL (275 aa)). GTP-binding positions include 17-24 (AHVDAGKT), 81-85 (DTPGH), and 135-138 (NKMD).

This sequence belongs to the TRAFAC class translation factor GTPase superfamily. Classic translation factor GTPase family. EF-G/EF-2 subfamily.

The protein resides in the cytoplasm. Functionally, catalyzes the GTP-dependent ribosomal translocation step during translation elongation. During this step, the ribosome changes from the pre-translocational (PRE) to the post-translocational (POST) state as the newly formed A-site-bound peptidyl-tRNA and P-site-bound deacylated tRNA move to the P and E sites, respectively. Catalyzes the coordinated movement of the two tRNA molecules, the mRNA and conformational changes in the ribosome. In Streptococcus pneumoniae serotype 2 (strain D39 / NCTC 7466), this protein is Elongation factor G.